The chain runs to 90 residues: DNA-binding protein HU (90 aa).

It belongs to the bacterial histone-like protein family. In terms of assembly, homodimer.

Histone-like DNA-binding protein which is capable of wrapping DNA to stabilize it, and thus to prevent its denaturation under extreme environmental conditions. The sequence is that of DNA-binding protein HU (hup) from Staphylococcus aureus (strain COL).